A 166-amino-acid polypeptide reads, in one-letter code: Crossover junction endodeoxyribonuclease RuvC (166 aa).

Residues aspartate 11, glutamate 71, and aspartate 142 contribute to the active site. 3 residues coordinate Mg(2+): aspartate 11, glutamate 71, and aspartate 142.

This sequence belongs to the RuvC family. Homodimer which binds Holliday junction (HJ) DNA. The HJ becomes 2-fold symmetrical on binding to RuvC with unstacked arms; it has a different conformation from HJ DNA in complex with RuvA. In the full resolvosome a probable DNA-RuvA(4)-RuvB(12)-RuvC(2) complex forms which resolves the HJ. Requires Mg(2+) as cofactor.

The protein localises to the cytoplasm. The enzyme catalyses Endonucleolytic cleavage at a junction such as a reciprocal single-stranded crossover between two homologous DNA duplexes (Holliday junction).. Its function is as follows. The RuvA-RuvB-RuvC complex processes Holliday junction (HJ) DNA during genetic recombination and DNA repair. Endonuclease that resolves HJ intermediates. Cleaves cruciform DNA by making single-stranded nicks across the HJ at symmetrical positions within the homologous arms, yielding a 5'-phosphate and a 3'-hydroxyl group; requires a central core of homology in the junction. The consensus cleavage sequence is 5'-(A/T)TT(C/G)-3'. Cleavage occurs on the 3'-side of the TT dinucleotide at the point of strand exchange. HJ branch migration catalyzed by RuvA-RuvB allows RuvC to scan DNA until it finds its consensus sequence, where it cleaves and resolves the cruciform DNA. This chain is Crossover junction endodeoxyribonuclease RuvC, found in Maricaulis maris (strain MCS10) (Caulobacter maris).